Here is a 527-residue protein sequence, read N- to C-terminus: Secologanin synthase 2 (527 aa).

Over M1–A11 the chain is Lumenal. The chain crosses the membrane as a helical span at residues I12–W32. At F33–F527 the chain is on the cytoplasmic side. C470 provides a ligand contact to heme.

It belongs to the cytochrome P450 family. Heme is required as a cofactor. As to expression, expressed in leaves (especially in leaf epidermis), and, to a lower extent, in roots, stems, flower buds and flowers.

The protein localises to the endoplasmic reticulum membrane. The enzyme catalyses loganin + reduced [NADPH--hemoprotein reductase] + O2 = secologanin + oxidized [NADPH--hemoprotein reductase] + 2 H2O + H(+). It carries out the reaction secologanin + reduced [NADPH--hemoprotein reductase] + O2 = secoxyloganin + oxidized [NADPH--hemoprotein reductase] + H2O + 2 H(+). It functions in the pathway alkaloid biosynthesis. Functionally, component of the seco-iridoid and derivatives monoterpenoid indole alkaloids (MIAs, e.g. secologanin) biosynthesis pathway. Catalyzes the conversion of loganin into secologanin. Catalyzes the conversion of secologanin into secoxyloganin. The polypeptide is Secologanin synthase 2 (Catharanthus roseus (Madagascar periwinkle)).